The sequence spans 302 residues: Pantothenate synthetase (302 aa).

30 to 37 (MGALHGGH) serves as a coordination point for ATP. Catalysis depends on His37, which acts as the Proton donor. Gln61 contacts (R)-pantoate. Residue Gln61 coordinates beta-alanine. Residue 147 to 150 (GEKD) participates in ATP binding. (R)-pantoate is bound at residue Gln153. ATP is bound by residues Val176 and 184–187 (KSSR).

It belongs to the pantothenate synthetase family. Homodimer.

Its subcellular location is the cytoplasm. It carries out the reaction (R)-pantoate + beta-alanine + ATP = (R)-pantothenate + AMP + diphosphate + H(+). It functions in the pathway cofactor biosynthesis; (R)-pantothenate biosynthesis; (R)-pantothenate from (R)-pantoate and beta-alanine: step 1/1. Its function is as follows. Catalyzes the condensation of pantoate with beta-alanine in an ATP-dependent reaction via a pantoyl-adenylate intermediate. This Shouchella clausii (strain KSM-K16) (Alkalihalobacillus clausii) protein is Pantothenate synthetase.